The sequence spans 454 residues: tRNA(Ile)-lysidine synthase (454 aa).

27–32 lines the ATP pocket; that stretch reads SGGSDS.

Belongs to the tRNA(Ile)-lysidine synthase family.

Its subcellular location is the cytoplasm. The enzyme catalyses cytidine(34) in tRNA(Ile2) + L-lysine + ATP = lysidine(34) in tRNA(Ile2) + AMP + diphosphate + H(+). Its function is as follows. Ligates lysine onto the cytidine present at position 34 of the AUA codon-specific tRNA(Ile) that contains the anticodon CAU, in an ATP-dependent manner. Cytidine is converted to lysidine, thus changing the amino acid specificity of the tRNA from methionine to isoleucine. This Mesorhizobium japonicum (strain LMG 29417 / CECT 9101 / MAFF 303099) (Mesorhizobium loti (strain MAFF 303099)) protein is tRNA(Ile)-lysidine synthase.